A 476-amino-acid chain; its full sequence is Cytochrome P450 monooxygenase ppzE (476 aa).

Residue Cys452 participates in heme binding.

This sequence belongs to the cytochrome P450 family. Requires heme as cofactor.

The protein operates within secondary metabolite biosynthesis. Its function is as follows. Cytochrome P450 monooxygenase; part of the gene cluster that mediates the biosynthesis of pyrrolopyrazines, secondary metabolites showing insecticidal activity. The role of ppzE within the pathway has still to be determined. The single multifunctional NRPS ppzA is sufficient to produce peramine via condensation of 1-pyrroline-5-carboxylate and arginine, N-methylation of the alpha-amino group of arginine and reduction of the thioester and the cyclization to form an iminium ion resulting in release from the peptide synthetase. Deprotonation of this intermediate and oxidation of the pyrroline ring would give rise to peramine. In Epichloe species that produce only peramine, the peramine synthetase gene is not localized in a gene cluster, in contrast to Metarhizium species that contain additional pyrrolopyrazine biosynthesis genes. The 2-oxoglutarate-Fe(II) type oxidoreductase ppzC hydroxylates peramine to yield the newly identified compound 8-hydroxyperamine whereas ppzD converts L-proline into trans-4-hydroxy-L-proline, a precursor of peramine biosynthesis. In Metarhizium majus (strain ARSEF 297), this protein is Cytochrome P450 monooxygenase ppzE.